A 229-amino-acid chain; its full sequence is Purine nucleoside phosphorylase BB_0467 (229 aa).

Residues H55, C91, and H108 each coordinate Zn(2+).

The protein belongs to the purine nucleoside phosphorylase YfiH/LACC1 family. In terms of assembly, homodimer. Cu(2+) serves as cofactor. The cofactor is Zn(2+).

It carries out the reaction adenosine + phosphate = alpha-D-ribose 1-phosphate + adenine. The enzyme catalyses S-methyl-5'-thioadenosine + phosphate = 5-(methylsulfanyl)-alpha-D-ribose 1-phosphate + adenine. The catalysed reaction is inosine + phosphate = alpha-D-ribose 1-phosphate + hypoxanthine. It catalyses the reaction adenosine + H2O + H(+) = inosine + NH4(+). Purine nucleoside enzyme that catalyzes the phosphorolysis of adenosine and inosine nucleosides, yielding D-ribose 1-phosphate and the respective free bases, adenine and hypoxanthine. Also catalyzes the phosphorolysis of S-methyl-5'-thioadenosine into adenine and S-methyl-5-thio-alpha-D-ribose 1-phosphate. Also has adenosine deaminase activity. This Borreliella burgdorferi (strain ATCC 35210 / DSM 4680 / CIP 102532 / B31) (Borrelia burgdorferi) protein is Purine nucleoside phosphorylase BB_0467.